The chain runs to 382 residues: Na(+)/H(+) antiporter NhaA (382 aa).

11 helical membrane-spanning segments follow: residues 14–34 (AGGILLVIAAAIAMMIANSSL), 49–69 (MSVSHWINDGLMAVFFLLIGL), 87–107 (IFPAIAAVGGMLAPALVYVAF), 117–137 (GWAIPAATDIAFALGIMALLG), 146–166 (VFLLALAIIDDLGVVVIIAFF), 171–191 (LSVLALVIGFVMTGLLFLLNA), 205–225 (FILWVSVLQSGVHATLAGVVL), 252–272 (VAFAILPVFAFANAGISLEGV), 285–305 (VALGLFLGKPLGIFSFSYLAV), 321–341 (IFAVSVLCGIGFTMSIFISSL), and 356–376 (LGILMGSTFAAVVGYALLSIS).

Belongs to the NhaA Na(+)/H(+) (TC 2.A.33) antiporter family.

It localises to the cell inner membrane. It catalyses the reaction Na(+)(in) + 2 H(+)(out) = Na(+)(out) + 2 H(+)(in). Functionally, na(+)/H(+) antiporter that extrudes sodium in exchange for external protons. This chain is Na(+)/H(+) antiporter NhaA, found in Aliivibrio fischeri (strain ATCC 700601 / ES114) (Vibrio fischeri).